The sequence spans 108 residues: Large ribosomal subunit protein eL32 (108 aa).

Residues 21–30 (RRPRGRTSKM) show a composition bias toward basic residues. Residues 21-44 (RRPRGRTSKMRRYEKGKPAMPAIG) are disordered.

Belongs to the eukaryotic ribosomal protein eL32 family.

The chain is Large ribosomal subunit protein eL32 (rpl32e) from Methanothermobacter thermautotrophicus (strain ATCC 29096 / DSM 1053 / JCM 10044 / NBRC 100330 / Delta H) (Methanobacterium thermoautotrophicum).